Consider the following 157-residue polypeptide: Deoxyuridine 5'-triphosphate nucleotidohydrolase (157 aa).

Substrate contacts are provided by residues 76–78 (RSG), Asn-89, 93–95 (TID), and Lys-103.

The protein belongs to the dUTPase family. It depends on Mg(2+) as a cofactor.

It carries out the reaction dUTP + H2O = dUMP + diphosphate + H(+). Its pathway is pyrimidine metabolism; dUMP biosynthesis; dUMP from dCTP (dUTP route): step 2/2. Functionally, this enzyme is involved in nucleotide metabolism: it produces dUMP, the immediate precursor of thymidine nucleotides and it decreases the intracellular concentration of dUTP so that uracil cannot be incorporated into DNA. The protein is Deoxyuridine 5'-triphosphate nucleotidohydrolase of Brucella abortus (strain 2308).